Reading from the N-terminus, the 173-residue chain is uncharacterized protein (173 aa).

Positions 1–25 (MPVVTAVGRRRGFAMPWVSTARSGA) are cleaved as a signal peptide.

This is an uncharacterized protein from Mycobacterium bovis (strain ATCC BAA-935 / AF2122/97).